The sequence spans 305 residues: MTVEELKKKKIAVLMGGLSAEREVSLNSGKAVLASLVKQGFRAVGIDVGRDLPQRLAEEQVELAFIALHGRFGEDGSVQGLLELMGIPYTGSGVLASALAIDKIASKVIFASAGLKLAPYQVLRRGEELKLANPLPVVVKPSREGSSVGVGIVRDPSRMQAALDEAFRYDSEILIEGFIDGREVQVGILNGKALGAIEIIPKGEFYDYEAKYTDGGAQHILPARLPEAVYAEVLRQGEKAHAALGCDCYSRVDFLVTETGDCFLLEVNTLPGMTDLSLLPEIAGGAGIAFGELVLRILQAASLKI.

Residues 107–299 enclose the ATP-grasp domain; it reads KVIFASAGLK…FGELVLRILQ (193 aa). ATP is bound at residue 134–185; the sequence is PLPVVVKPSREGSSVGVGIVRDPSRMQAALDEAFRYDSEILIEGFIDGREVQ. Asp253, Glu266, and Asn268 together coordinate Mg(2+).

The protein belongs to the D-alanine--D-alanine ligase family. Mg(2+) serves as cofactor. The cofactor is Mn(2+).

The protein resides in the cytoplasm. It carries out the reaction 2 D-alanine + ATP = D-alanyl-D-alanine + ADP + phosphate + H(+). Its pathway is cell wall biogenesis; peptidoglycan biosynthesis. Functionally, cell wall formation. This Citrifermentans bemidjiense (strain ATCC BAA-1014 / DSM 16622 / JCM 12645 / Bem) (Geobacter bemidjiensis) protein is D-alanine--D-alanine ligase.